The sequence spans 384 residues: MNNKNIMIVGAGFSGVVIARQLAEQGYTVKIIDRRDHIGGNSYDTRDPQTDVMVHVYGPHIFHTDNETVWNYVNQYAEMMPYVNRVKATVNGQVFSLPINLHTINQFFAKTCSPDEARALISEKGDSSIVEPQTFEEQALRFIGKELYEAFFKGYTIKQWGMEPSELPASILKRLPVRFNYDDNYFNHKFQGMPKLGYTRMIEAIADHENISIELQREFLPEEREDYAHVFYSGPLDAFYSYQYGRLGYRTLDFEKFTYQGDYQGCAVMNYCSIDVPYTRITEHKYFSPWESHEGSVCYKEYSRACGENDIPYYPIRQMGEMALLEKYLSLAESEKNITFVGRLGTYRYLDMDVTIAEALKTADEFLSSVANQEEMPVFTVPVR.

Residues 1 to 19 form the signal peptide; that stretch reads MNNKNIMIVGAGFSGVVIA. Residues S14, 33-34, N41, and 60-61 contribute to the FAD site; these read DR and HI. Positions 84, 151, 156, 160, and 185 each coordinate UDP-alpha-D-galactose. An FAD-binding site is contributed by F219. Residues N270, R280, and Y314 each coordinate UDP-alpha-D-galactose. FAD is bound at residue R343. A UDP-alpha-D-galactose-binding site is contributed by Y349. 350–355 contacts FAD; the sequence is LDMDVT.

Belongs to the UDP-galactopyranose/dTDP-fucopyranose mutase family. Homodimer. Requires FAD as cofactor.

It catalyses the reaction UDP-alpha-D-galactose = UDP-alpha-D-galactofuranose. The protein operates within bacterial outer membrane biogenesis; LPS O-antigen biosynthesis. Functionally, catalyzes the interconversion through a 2-keto intermediate of uridine diphosphogalactopyranose (UDP-GalP) into uridine diphosphogalactofuranose (UDP-GalF). This chain is Probable UDP-galactopyranose mutase (rfbD), found in Klebsiella pneumoniae.